A 110-amino-acid polypeptide reads, in one-letter code: Eukaryotic translation initiation factor eIF1 (110 aa).

The residue at position 40 (Thr40) is a Phosphothreonine.

It belongs to the SUI1 family.

Its function is as follows. Probably involved in translation. The polypeptide is Eukaryotic translation initiation factor eIF1 (Drosophila melanogaster (Fruit fly)).